The following is a 237-amino-acid chain: D-aminoacyl-tRNA deacylase (237 aa).

Belongs to the DtdA deacylase family. In terms of assembly, monomer. The cofactor is Zn(2+).

It catalyses the reaction a D-aminoacyl-tRNA + H2O = a tRNA + a D-alpha-amino acid + H(+). The enzyme catalyses glycyl-tRNA(Ala) + H2O = tRNA(Ala) + glycine + H(+). Its function is as follows. D-aminoacyl-tRNA deacylase with broad substrate specificity. By recycling D-aminoacyl-tRNA to D-amino acids and free tRNA molecules, this enzyme counteracts the toxicity associated with the formation of D-aminoacyl-tRNA entities in vivo. This is D-aminoacyl-tRNA deacylase from Metallosphaera sedula (strain ATCC 51363 / DSM 5348 / JCM 9185 / NBRC 15509 / TH2).